The primary structure comprises 51 residues: Lantibiotic streptococcin A-M49 (51 aa).

The propeptide occupies 1-25 (MTKEHEIINSIQEVSLEELDQIIGA). 2 cross-links (beta-methyllanthionine (Thr-Cys)) span residues 33–38 (TISHEC) and 42–50 (TWAFLATCC). Positions 35–49 (SHECHLNTWAFLATC) form a cross-link, lanthionine (Ser-Cys). 2,3-didehydrobutyrine is present on Thr-48.

The protein belongs to the type A lantibiotic family. Maturation of lantibiotics involves the enzymatic conversion of Thr, and Ser into dehydrated AA and the formation of thioether bonds with cysteine. This is followed by membrane translocation and cleavage of the modified precursor.

The protein resides in the secreted. It is found in the cell surface. Lanthionine-containing peptide antibiotic (lantibiotic) active on certain Gram-positive bacteria. The bactericidal activity of lantibiotics is based on depolarization of energized bacterial cytoplasmic membranes, initiated by the formation of aqueous transmembrane pores. In Streptococcus pyogenes serotype M49, this protein is Lantibiotic streptococcin A-M49 (scnA').